A 428-amino-acid polypeptide reads, in one-letter code: MFVDKVKVYAKGGDGGNGMVAYRREKYVPDGGPAGGDGGRGASVILEVDEGLRTLMDFRYNKHFKGKRGEHGMSKNMHGKKAEDLVVKVPPGTMVTDEETGALLADLTTHGQRAVVAKGGRGGRGNVRFVTPANPAPDHAENGEPGEERNLLLELKVLADVGLVGFPSVGKSTLLSIVSAAKPKIAEYHFTTITPNLGVVDTQDGRSFVMADLPGLIEGAHEGVGLGHQFLRHIERTRVIVHIVDMSAMEGRDPVEDYHKINEELSQYNYRLTERPQLVVANKMDMPEANENLKRFKEALGEETKIFPVSAITKDGVRELMLAIADELEHAPEFPLHDSEEQVEGRVLYKHELPIEPFTITRGDDGVFELSGAELERAFKMTDFAREESVRRFARRMRKMGVDEALRKRGAKDGDLVRIMKFEFEFVE.

Residues 1–158 (MFVDKVKVYA…RNLLLELKVL (158 aa)) enclose the Obg domain. Positions 159–329 (ADVGLVGFPS…LMLAIADELE (171 aa)) constitute an OBG-type G domain. GTP is bound by residues 165-172 (GFPSVGKS), 190-194 (FTTIT), 212-215 (DLPG), 282-285 (NKMD), and 310-312 (SAI). Residues Ser-172 and Thr-192 each coordinate Mg(2+). One can recognise an OCT domain in the interval 350–428 (KHELPIEPFT…IMKFEFEFVE (79 aa)).

This sequence belongs to the TRAFAC class OBG-HflX-like GTPase superfamily. OBG GTPase family. In terms of assembly, monomer. It depends on Mg(2+) as a cofactor.

It localises to the cytoplasm. Functionally, an essential GTPase which binds GTP, GDP and possibly (p)ppGpp with moderate affinity, with high nucleotide exchange rates and a fairly low GTP hydrolysis rate. Plays a role in control of the cell cycle, stress response, ribosome biogenesis and in those bacteria that undergo differentiation, in morphogenesis control. In Shouchella clausii (strain KSM-K16) (Alkalihalobacillus clausii), this protein is GTPase Obg.